Consider the following 112-residue polypeptide: MVTEKKTKKSHEGINSRLALVMKSGKYTLGYKSVLKSLRGSKGKLILISTNCPPLRRSEIEYYAMLAKVGVHHYNGNNVDLGTACGKYFRVSCLSIVDPGDSDIIKSIPGDQ.

The protein belongs to the eukaryotic ribosomal protein eL30 family.

The protein is Large ribosomal subunit protein eL30y (RPL30B) of Arabidopsis thaliana (Mouse-ear cress).